The chain runs to 180 residues: V-type proton ATPase subunit c''1 (180 aa).

At 1 to 26 the chain is on the lumenal side; it reads MSGVVALGHASSWGAALVRISPYTFS. The helical transmembrane segment at 27-47 threads the bilayer; sequence AIGIAISIGVSVLGAAWGIYI. Residues 48 to 66 lie on the Cytoplasmic side of the membrane; sequence TGSSLIGAAIEAPRITSKN. Residues 67–87 traverse the membrane as a helical segment; sequence LISVIFCEAVAIYGVIVAIIL. Residues 88 to 110 are Lumenal-facing; that stretch reads QTKLESVPSSKMYDAESLRAGYA. Residues 111–131 traverse the membrane as a helical segment; sequence IFASGIIVGFANLVCGLCVGI. Residues 132-149 are Cytoplasmic-facing; that stretch reads IGSSCALSDAQNSTLFVK. A helical transmembrane segment spans residues 150 to 170; that stretch reads ILVIEIFGSALGLFGVIVGII. At 171–180 the chain is on the lumenal side; the sequence is MSAQATWPTK.

It belongs to the V-ATPase proteolipid subunit family. As to quaternary structure, V-ATPase is a heteromultimeric enzyme composed of a peripheral catalytic V1 complex (components A to H) attached to an integral membrane V0 proton pore complex (components: a, c, c'', d and e). The proteolipid components c and c'' are present as a hexameric ring that forms the proton-conducting pore. Preferentially expressed in roots.

The protein localises to the endoplasmic reticulum membrane. It localises to the golgi apparatus membrane. In terms of biological role, proton-conducting pore forming subunit of the membrane integral V0 complex of vacuolar ATPase. V-ATPase is responsible for acidifying a variety of intracellular compartments in eukaryotic cells. The sequence is that of V-type proton ATPase subunit c''1 (VHA-c''1) from Arabidopsis thaliana (Mouse-ear cress).